A 251-amino-acid chain; its full sequence is 5'-nucleotidase SurE (251 aa).

A divalent metal cation is bound by residues aspartate 8, aspartate 9, serine 39, and asparagine 95.

This sequence belongs to the SurE nucleotidase family. It depends on a divalent metal cation as a cofactor.

It localises to the cytoplasm. The enzyme catalyses a ribonucleoside 5'-phosphate + H2O = a ribonucleoside + phosphate. Nucleotidase that shows phosphatase activity on nucleoside 5'-monophosphates. The sequence is that of 5'-nucleotidase SurE from Ralstonia pickettii (strain 12J).